We begin with the raw amino-acid sequence, 499 residues long: Glycerol kinase (499 aa).

Residue Thr13 participates in ADP binding. Residues Thr13, Thr14, and Ser15 each coordinate ATP. Thr13 provides a ligand contact to sn-glycerol 3-phosphate. Position 17 (Arg17) interacts with ADP. Sn-glycerol 3-phosphate is bound by residues Arg83, Glu84, Tyr135, and Asp245. The glycerol site is built by Arg83, Glu84, Tyr135, Asp245, and Gln246. Positions 267 and 310 each coordinate ADP. ATP-binding residues include Thr267, Gly310, Gln314, and Gly411. Gly411 and Asn415 together coordinate ADP.

The protein belongs to the FGGY kinase family. Homotetramer and homodimer (in equilibrium).

It catalyses the reaction glycerol + ATP = sn-glycerol 3-phosphate + ADP + H(+). Its pathway is polyol metabolism; glycerol degradation via glycerol kinase pathway; sn-glycerol 3-phosphate from glycerol: step 1/1. Its activity is regulated as follows. Activated by phosphorylation and inhibited by fructose 1,6-bisphosphate (FBP). Key enzyme in the regulation of glycerol uptake and metabolism. Catalyzes the phosphorylation of glycerol to yield sn-glycerol 3-phosphate. The sequence is that of Glycerol kinase from Halothermothrix orenii (strain H 168 / OCM 544 / DSM 9562).